Reading from the N-terminus, the 229-residue chain is Orotate phosphoribosyltransferase (229 aa).

Residues R107, K108, K111, H113, and 133–141 (EDLTTAGGS) each bind 5-phospho-alpha-D-ribose 1-diphosphate. T137 is an orotate binding site.

The protein belongs to the purine/pyrimidine phosphoribosyltransferase family. PyrE subfamily. In terms of assembly, homodimer. The cofactor is Mg(2+).

It catalyses the reaction orotidine 5'-phosphate + diphosphate = orotate + 5-phospho-alpha-D-ribose 1-diphosphate. The protein operates within pyrimidine metabolism; UMP biosynthesis via de novo pathway; UMP from orotate: step 1/2. Its function is as follows. Catalyzes the transfer of a ribosyl phosphate group from 5-phosphoribose 1-diphosphate to orotate, leading to the formation of orotidine monophosphate (OMP). The chain is Orotate phosphoribosyltransferase from Rhizobium etli (strain CIAT 652).